The primary structure comprises 162 residues: Protein-export protein SecB (162 aa).

The protein belongs to the SecB family. In terms of assembly, homotetramer, a dimer of dimers. One homotetramer interacts with 1 SecA dimer.

Its subcellular location is the cytoplasm. In terms of biological role, one of the proteins required for the normal export of preproteins out of the cell cytoplasm. It is a molecular chaperone that binds to a subset of precursor proteins, maintaining them in a translocation-competent state. It also specifically binds to its receptor SecA. The sequence is that of Protein-export protein SecB from Legionella pneumophila (strain Paris).